The chain runs to 239 residues: Isopentenyl-diphosphate Delta-isomerase (239 aa).

Lys43 is a binding site for substrate. Mg(2+) contacts are provided by His47 and His58. One can recognise a Nudix hydrolase domain in the interval Leu56–Leu210. Residues Arg77 and Lys81 each contribute to the substrate site. Residue Cys93 is part of the active site. A substrate-binding site is contributed by Ser94. Positions 156 and 158 each coordinate Mg(2+). The active site involves Glu158.

It belongs to the IPP isomerase type 1 family. The cofactor is Mg(2+).

The catalysed reaction is isopentenyl diphosphate = dimethylallyl diphosphate. Its pathway is isoprenoid biosynthesis; dimethylallyl diphosphate biosynthesis; dimethylallyl diphosphate from isopentenyl diphosphate: step 1/1. Functionally, catalyzes the 1,3-allylic rearrangement of the homoallylic substrate isopentenyl (IPP) to its highly electrophilic allylic isomer, dimethylallyl diphosphate (DMAPP). The chain is Isopentenyl-diphosphate Delta-isomerase (ipi) from Dictyostelium discoideum (Social amoeba).